A 166-amino-acid polypeptide reads, in one-letter code: UPF0561 protein C2orf68 homolog (166 aa).

Over residues asparagine 32–glutamate 49 the composition is skewed to basic and acidic residues. Residues asparagine 32–leucine 107 are disordered. The span at glutamate 91–glutamate 101 shows a compositional bias: low complexity.

The protein belongs to the UPF0561 family.

The protein is UPF0561 protein C2orf68 homolog of Mus musculus (Mouse).